We begin with the raw amino-acid sequence, 154 residues long: Probable deoxyuridine 5'-triphosphate nucleotidohydrolase (154 aa).

It belongs to the dCTP deaminase family. Archaeal dUTPase subfamily.

It carries out the reaction dUTP + H2O = dUMP + diphosphate + H(+). It functions in the pathway pyrimidine metabolism; dUMP biosynthesis; dUMP from dCTP (dUTP route): step 2/2. Functionally, this enzyme is involved in nucleotide metabolism: it produces dUMP, the immediate precursor of thymidine nucleotides and it decreases the intracellular concentration of dUTP so that uracil cannot be incorporated into DNA. This chain is Probable deoxyuridine 5'-triphosphate nucleotidohydrolase, found in Methanopyrus kandleri (strain AV19 / DSM 6324 / JCM 9639 / NBRC 100938).